A 421-amino-acid polypeptide reads, in one-letter code: Testin (421 aa).

The 108-residue stretch at 92 to 199 folds into the PET domain; it reads MILTNPVAAK…GDVKLPCEMD (108 aa). The tract at residues 133–164 is disordered; the sequence is EKQPVAGSEGAQYRKKQLAKQLPAHDQDPSKC. The span at 155 to 164 shows a compositional bias: basic and acidic residues; sequence PAHDQDPSKC. LIM zinc-binding domains are found at residues 234–297, 299–359, and 362–421; these read YSCY…CDSE, PRCA…NHAV, and QGCH…KMMS.

Belongs to the prickle / espinas / testin family. Interacts via LIM domain 1 with ZYX. Interacts (via LIM domain 3) with ENAH and VASP. Interacts with ALKBH4, talin, actin, alpha-actinin, GRIP1 and PXN. Interacts (via LIM domain 2) with ACTL7A (via N-terminus). Heterodimer with ACTL7A; the heterodimer interacts with ENAH to form a heterotrimer.

It localises to the cytoplasm. The protein localises to the cell junction. It is found in the focal adhesion. Functionally, scaffold protein that may play a role in cell adhesion, cell spreading and in the reorganization of the actin cytoskeleton. Plays a role in the regulation of cell proliferation. May act as a tumor suppressor. The chain is Testin (TES) from Papio anubis (Olive baboon).